Reading from the N-terminus, the 234-residue chain is Venom allergen 3 (234 aa).

An N-terminal signal peptide occupies residues 1–22 (MELIVSILWLAITAENLANTLA). 4 disulfide bridges follow: Cys26–Cys41, Cys31–Cys125, Cys52–Cys118, and Cys198–Cys216. The SCP domain occupies 69-218 (VNKHNELRQR…WTKHYLVCNY (150 aa)). A disordered region spans residues 80–99 (ASGKEMRGTNGPQPPAVKMP).

This sequence belongs to the CRISP family. As to expression, expressed by the venom gland.

It is found in the secreted. This is Venom allergen 3 from Solenopsis invicta (Red imported fire ant).